A 61-amino-acid chain; its full sequence is Metallothionein-1E (61 aa).

Met1 carries the N-acetylmethionine modification. A beta region spans residues 1-29 (MDPNCSCATGGSCTCAGSCKCKECKCTSC). A divalent metal cation-binding residues include Cys5, Cys7, Cys13, Cys15, Cys19, Cys21, Cys24, Cys26, Cys29, Cys33, Cys34, Cys36, Cys37, Cys41, Cys44, Cys48, Cys50, Cys57, Cys59, and Cys60. An alpha region spans residues 30–61 (KKSCCSCCPVGCAKCAQGCVCKGASEKCSCCA).

Belongs to the metallothionein superfamily. Type 1 family. In terms of assembly, monomer.

Functionally, metallothioneins have a high content of cysteine residues that bind various heavy metals; these proteins are transcriptionally regulated by both heavy metals and glucocorticoids. This is Metallothionein-1E (MT1E) from Homo sapiens (Human).